We begin with the raw amino-acid sequence, 449 residues long: Glutamyl-tRNA reductase (449 aa).

Substrate is bound by residues Thr-58 to Arg-61, Ser-121, Glu-126 to Gln-128, and Gln-132. The Nucleophile role is filled by Cys-59. Gly-203–Ala-208 is an NADP(+) binding site.

The protein belongs to the glutamyl-tRNA reductase family. In terms of assembly, homodimer.

The catalysed reaction is (S)-4-amino-5-oxopentanoate + tRNA(Glu) + NADP(+) = L-glutamyl-tRNA(Glu) + NADPH + H(+). It functions in the pathway porphyrin-containing compound metabolism; protoporphyrin-IX biosynthesis; 5-aminolevulinate from L-glutamyl-tRNA(Glu): step 1/2. Its function is as follows. Catalyzes the NADPH-dependent reduction of glutamyl-tRNA(Glu) to glutamate 1-semialdehyde (GSA). The sequence is that of Glutamyl-tRNA reductase from Helicobacter pylori (strain J99 / ATCC 700824) (Campylobacter pylori J99).